A 1190-amino-acid polypeptide reads, in one-letter code: Serine/threonine-protein kinase N (1190 aa).

3 REM-1 domains span residues 28-102 (NLPE…QILL), 142-219 (ALEG…NREQ), and 242-322 (SSQP…ELPA). Residues 359 to 515 (LGGKPYQSVS…MALQLEPQGL (157 aa)) enclose the C2 domain. A compositionally biased stretch (basic and acidic residues) spans 395 to 404 (PGRSRRDKDN). 4 disordered regions span residues 395 to 415 (PGRS…RSFV), 572 to 715 (HVHM…PPPP), 757 to 787 (PATP…QPPQ), and 811 to 832 (SPSS…RNVA). Low complexity-rich tracts occupy residues 576 to 588 (GSAG…TGSS) and 767 to 787 (AAAG…QPPQ). In terms of domain architecture, Protein kinase spans 863 to 1122 (FRLLSVLGRG…AEDVKKQAFF (260 aa)). ATP-binding positions include 869-877 (LGRGHFGKV) and K892. D988 functions as the Proton acceptor in the catalytic mechanism. The 68-residue stretch at 1123–1190 (RSIVWDDLLL…QDFSYTAEWC (68 aa)) folds into the AGC-kinase C-terminal domain.

This sequence belongs to the protein kinase superfamily. Ser/Thr protein kinase family. Interacts (via N-terminus) with Rho1 (via REM repeats), Rac1 (via REM 1 repeat) and Rac2. Phosphorylated. Autophosphorylated; autophosphorylation is stimulated by GTP-bound Rho/Rac GTPases.

The protein resides in the cytoplasm. It localises to the nucleus. It is found in the membrane. Its subcellular location is the cell projection. The protein localises to the lamellipodium. The protein resides in the cytoskeleton. It localises to the cleavage furrow. It is found in the midbody. Its subcellular location is the cell junction. The catalysed reaction is L-seryl-[protein] + ATP = O-phospho-L-seryl-[protein] + ADP + H(+). It carries out the reaction L-threonyl-[protein] + ATP = O-phospho-L-threonyl-[protein] + ADP + H(+). Its activity is regulated as follows. Activated by lipids, particularly cardiolipin and to a lesser extent by other acidic phospholipids and unsaturated fatty acids. Two specific sites, Thr-1022 (activation loop of the kinase domain) and Thr-1164 (turn motif), may be needed to be phosphorylated for its full activation. Kinase activity is activated upon binding to GTP-bound Rho/Rac GTPases. Pkc-related serine/threonine-protein kinase and Rho/Rac effector protein that participates in specific signal transduction responses in the cell. May play a role in the regulation of cell cycle progression, actin cytoskeleton assembly, cell migration, cell adhesion and transcription activation signaling processes. Plays a role in regulating Rho-mediated dorsal closure during embryogenesis. This Drosophila melanogaster (Fruit fly) protein is Serine/threonine-protein kinase N (Pkn).